Reading from the N-terminus, the 338-residue chain is MELPILPTSVIGSYPKPRWLLRMYKLRELGKIPEEDFKEAVKDASVAVLREHERAGVDIPWDGEMWRSEMTEHFTAKISGFKFYGPVRVWGNAYFNKAAAVDKLEYKEPLVLEEFLWVRENTTREIVKVPITGPYTIAEWSFNEYYPDKESFVMDLAKIINKELKTLEEHGATYIQLDEPAMLNHPDEVPLAVEAINRAVKGIKIKVGLHVCYSNYYLLADYFDDIRVTQFALEFANRQFRDMDFLKKLSGKELGFGVVDVHNPRIETVDEIVRAIKKAFNYLEPEWLYINPDCGLKLLDRRIAYQKLVNMVKAVRIVRKELEKEGRAETEFRTLNDI.

Zn(2+) contacts are provided by histidine 210, cysteine 212, glutamate 234, and cysteine 294.

The protein belongs to the archaeal MetE family. Zn(2+) serves as cofactor.

It functions in the pathway amino-acid biosynthesis; L-methionine biosynthesis via de novo pathway. Functionally, catalyzes the transfer of a methyl group to L-homocysteine resulting in methionine formation. The physiological methyl donor is unknown. This Pyrococcus abyssi (strain GE5 / Orsay) protein is Methionine synthase.